A 446-amino-acid polypeptide reads, in one-letter code: Probable D-serine dehydratase (446 aa).

Residue K116 is modified to N6-(pyridoxal phosphate)lysine.

This sequence belongs to the serine/threonine dehydratase family. DsdA subfamily. Requires pyridoxal 5'-phosphate as cofactor.

The enzyme catalyses D-serine = pyruvate + NH4(+). The protein is Probable D-serine dehydratase of Bacillus thuringiensis (strain Al Hakam).